The following is a 94-amino-acid chain: Potassium channel protein kcv (94 aa).

A helical transmembrane segment spans residues 14–34 (FMIHLFILAMFVMIYKFFPGG). An N-linked (GlcNAc...) asparagine; by host glycan is attached at Asn-38. A helical transmembrane segment spans residues 74 to 94 (TGAKLCTIAHIVTVFFIVLTL).

The protein belongs to the two pore domain potassium channel (TC 1.A.1.12) family.

The protein localises to the membrane. Functionally, potassium-selective channel essential in the virus replication cycle. May be involved in preventing multiple infections (Potential). The protein is Potassium channel protein kcv (A250R) of Paramecium bursaria Chlorella virus 1 (PBCV-1).